The sequence spans 208 residues: NAD(P)H-quinone oxidoreductase subunit I (208 aa).

4Fe-4S ferredoxin-type domains are found at residues 55-84 and 95-124; these read GRIHYEFDKCIACEVCVRVCPINLPVVDWV and RNYSIDFGVCIFCGNCVEYCPTNCLSMTEE. [4Fe-4S] cluster contacts are provided by C64, C67, C70, C74, C104, C107, C110, and C114.

Belongs to the complex I 23 kDa subunit family. As to quaternary structure, NDH-1 is composed of at least 11 different subunits. [4Fe-4S] cluster serves as cofactor.

Its subcellular location is the cellular thylakoid membrane. The enzyme catalyses a plastoquinone + NADH + (n+1) H(+)(in) = a plastoquinol + NAD(+) + n H(+)(out). It catalyses the reaction a plastoquinone + NADPH + (n+1) H(+)(in) = a plastoquinol + NADP(+) + n H(+)(out). In terms of biological role, NDH-1 shuttles electrons from an unknown electron donor, via FMN and iron-sulfur (Fe-S) centers, to quinones in the respiratory and/or the photosynthetic chain. The immediate electron acceptor for the enzyme in this species is believed to be plastoquinone. Couples the redox reaction to proton translocation, and thus conserves the redox energy in a proton gradient. This Prochlorococcus marinus (strain MIT 9515) protein is NAD(P)H-quinone oxidoreductase subunit I.